Reading from the N-terminus, the 156-residue chain is Small ribosomal subunit protein uS7 (156 aa).

Belongs to the universal ribosomal protein uS7 family. Part of the 30S ribosomal subunit. Contacts proteins S9 and S11.

Functionally, one of the primary rRNA binding proteins, it binds directly to 16S rRNA where it nucleates assembly of the head domain of the 30S subunit. Is located at the subunit interface close to the decoding center, probably blocks exit of the E-site tRNA. The chain is Small ribosomal subunit protein uS7 from Nitrobacter winogradskyi (strain ATCC 25391 / DSM 10237 / CIP 104748 / NCIMB 11846 / Nb-255).